The primary structure comprises 403 residues: LIM/homeobox protein Lhx1 (403 aa).

LIM zinc-binding domains are found at residues 4–54 (CAGC…CKND) and 63–117 (CAGC…CKED). The segment covering 131–147 (ISVTGSDPSLSPESQDP) has biased composition (polar residues). Disordered stretches follow at residues 131–185 (ISVT…PRTT) and 318–366 (PAGT…SMHS). The segment covering 150-166 (DDAKDSESANVSDKEAG) has biased composition (basic and acidic residues). Residues 179–238 (RRGPRTTIKAKQLETLKAAFAATPKPTRHIREQLAQETGLNMRVIQVWFQNRRSKERRMK) constitute a DNA-binding region (homeobox).

In terms of assembly, interacts with ldb1 via the tandem LIM domains. Both LIM domains are required for optimal binding and binding relieves the inhibitory effect of the LIM domains and activates lhx1. Binding to ldb1 also prevents degradation of ldb1 by rnf12. The stoichiometry of lhx1 and ldb1 is important for their function and an excess of ldb1 can inhibit lhx1 function. Interacts with the N-terminal region of rnf12 by a homeobox-dependent mechanism. As to expression, exhibits a biphasic expression pattern. Initially localized to the Spemann organizer region of gastrulae, leading to expression in prechordal mesoderm and notochord. In the second phase, expressed in the lateral mesoderm and neural plate, eventually concentrating in the pronephros and the CNS. Expressed in the pronephros primordium by late gastrula (stage 12.5) and becomes restricted to the tips of the tubules and ducts as kidney development progresses. In the CNS, becomes progressively recognizable in anatomically distinct structures during larval development. Within the forebrain, shows almost identical expression to lhx5 in the diencephalon, being expressed in alternating stripes to lhx2 and lhx9. Expressed in the diencephalic pretectum within prosomere 1, hypothalamus, ventral thalamus and zona limitans intrathalamica. In the telencephalon, the expression pattern is distinct from lhx5, being localized in the pallium and subpallium. Also expressed in the ventral territories of midbrain (mesencephalon) and hindbrain (rhombencephalon), being expressed in the mesencephalic tegmentum and hindbrain reticular formation. Also shows intense expression in the cerebellum including Purkinje cells.

It is found in the nucleus. Involved in the establishment of the body plan via the Spemann organizer during gastrulation. Transcriptional activator required to induce organizer gene expression downstream of siamois. Promotes head formation by binding to 5'-TAAT'-3' elements in the promoters of head organizer genes cer1 and gsc to stimulate expression. Binds as a complex with siamois and mix-A/mix.1 to the cer1 promoter, and with ldb1 and otx2 to the gsc promoter. Also involved in neural induction via the organizer, including a role in notochord formation. Acts synergistically with ldb1 and ssbp in subsequent axis formation. Involved in kidney development, acting synergistically with pax8 to establish the pronephric primordium in late gastrulae/early neurulae and with pax2 during pronephric morphogenesis in tailbud stages. Has a later role in mediating the activity of inhibitors of ventralization. This is LIM/homeobox protein Lhx1 (lhx1) from Xenopus laevis (African clawed frog).